A 420-amino-acid polypeptide reads, in one-letter code: Serine hydroxymethyltransferase (420 aa).

Residues Leu-117 and 121–123 (GHL) contribute to the (6S)-5,6,7,8-tetrahydrofolate site. Lys-226 is modified (N6-(pyridoxal phosphate)lysine).

The protein belongs to the SHMT family. As to quaternary structure, homodimer. It depends on pyridoxal 5'-phosphate as a cofactor.

It localises to the cytoplasm. The enzyme catalyses (6R)-5,10-methylene-5,6,7,8-tetrahydrofolate + glycine + H2O = (6S)-5,6,7,8-tetrahydrofolate + L-serine. Its pathway is one-carbon metabolism; tetrahydrofolate interconversion. The protein operates within amino-acid biosynthesis; glycine biosynthesis; glycine from L-serine: step 1/1. Its function is as follows. Catalyzes the reversible interconversion of serine and glycine with tetrahydrofolate (THF) serving as the one-carbon carrier. This reaction serves as the major source of one-carbon groups required for the biosynthesis of purines, thymidylate, methionine, and other important biomolecules. Also exhibits THF-independent aldolase activity toward beta-hydroxyamino acids, producing glycine and aldehydes, via a retro-aldol mechanism. The chain is Serine hydroxymethyltransferase from Rhodopirellula baltica (strain DSM 10527 / NCIMB 13988 / SH1).